The following is a 382-amino-acid chain: Chaperone protein DnaJ (382 aa).

The 66-residue stretch at 5 to 70 (DYYDLLGLSK…DKRAAYDRYG (66 aa)) folds into the J domain. The CR-type zinc-finger motif lies at 138 to 216 (GTKVPINYVT…CSGSGRVRDE (79 aa)). Zn(2+) is bound by residues Cys151, Cys154, Cys168, Cys171, Cys190, Cys193, Cys204, and Cys207. 4 CXXCXGXG motif repeats span residues 151–158 (CSSCSGSG), 168–175 (CNTCHGAG), 190–197 (CHVCNGEG), and 204–211 (CKKCSGSG).

The protein belongs to the DnaJ family. Homodimer. Zn(2+) serves as cofactor.

The protein resides in the cytoplasm. Participates actively in the response to hyperosmotic and heat shock by preventing the aggregation of stress-denatured proteins and by disaggregating proteins, also in an autonomous, DnaK-independent fashion. Unfolded proteins bind initially to DnaJ; upon interaction with the DnaJ-bound protein, DnaK hydrolyzes its bound ATP, resulting in the formation of a stable complex. GrpE releases ADP from DnaK; ATP binding to DnaK triggers the release of the substrate protein, thus completing the reaction cycle. Several rounds of ATP-dependent interactions between DnaJ, DnaK and GrpE are required for fully efficient folding. Also involved, together with DnaK and GrpE, in the DNA replication of plasmids through activation of initiation proteins. This is Chaperone protein DnaJ from Ehrlichia ruminantium (strain Welgevonden).